We begin with the raw amino-acid sequence, 317 residues long: Endochitinase 3 (317 aa).

An N-terminal signal peptide occupies residues 1 to 19; it reads MFVRNALVVTGLLAALTQA. Residues Asn-25, Asn-49, and Asn-169 are each glycosylated (N-linked (GlcNAc...) asparagine). Positions 29-317 constitute a GH18 domain; the sequence is HKLTVYWGAE…NYQKEIKANL (289 aa). The active-site Proton donor is the Glu-170. A glycan (N-linked (GlcNAc...) asparagine) is linked at Asn-245.

This sequence belongs to the glycosyl hydrolase 18 family. Chitinase class III subfamily.

The protein resides in the secreted. The catalysed reaction is Random endo-hydrolysis of N-acetyl-beta-D-glucosaminide (1-&gt;4)-beta-linkages in chitin and chitodextrins.. Secreted chitinase involved in the degradation of chitin, a component of the cell walls of fungi and exoskeletal elements of some animals (including worms and arthropods). Participates in the infection process and directly acts in the penetration process of the host cuticle. Involved in heat-shock adaptation. The polypeptide is Endochitinase 3 (chi3) (Metarhizium robertsii (strain ARSEF 23 / ATCC MYA-3075) (Metarhizium anisopliae (strain ARSEF 23))).